Here is a 331-residue protein sequence, read N- to C-terminus: Ribosomal RNA small subunit methyltransferase H (331 aa).

Residues G56–H58, D76, F100, D122, and Q129 contribute to the S-adenosyl-L-methionine site.

It belongs to the methyltransferase superfamily. RsmH family.

The protein localises to the cytoplasm. The enzyme catalyses cytidine(1402) in 16S rRNA + S-adenosyl-L-methionine = N(4)-methylcytidine(1402) in 16S rRNA + S-adenosyl-L-homocysteine + H(+). In terms of biological role, specifically methylates the N4 position of cytidine in position 1402 (C1402) of 16S rRNA. The protein is Ribosomal RNA small subunit methyltransferase H of Chromohalobacter salexigens (strain ATCC BAA-138 / DSM 3043 / CIP 106854 / NCIMB 13768 / 1H11).